A 115-amino-acid chain; its full sequence is Macrophage migration inhibitory factor (115 aa).

The Proton acceptor; via imino nitrogen role is filled by proline 2. The substrate site is built by lysine 33 and isoleucine 65. The residue at position 78 (lysine 78) is an N6-acetyllysine; alternate. Lysine 78 is subject to N6-succinyllysine; alternate. Asparagine 98 is a substrate binding site.

This sequence belongs to the MIF family. Homotrimer. Interacts with CXCR2 extracellular domain. Interacts with the CD74 extracellular domain, USO1, COPS5 and BNIPL.

The protein resides in the secreted. The protein localises to the cytoplasm. The enzyme catalyses 3-phenylpyruvate = enol-phenylpyruvate. It carries out the reaction L-dopachrome = 5,6-dihydroxyindole-2-carboxylate. Functionally, pro-inflammatory cytokine involved in the innate immune response to bacterial pathogens. The expression of MIF at sites of inflammation suggests a role as mediator in regulating the function of macrophages in host defense. Counteracts the anti-inflammatory activity of glucocorticoids. Has phenylpyruvate tautomerase and dopachrome tautomerase activity (in vitro), but the physiological substrate is not known. It is not clear whether the tautomerase activity has any physiological relevance, and whether it is important for cytokine activity. This is Macrophage migration inhibitory factor from Homo sapiens (Human).